The following is a 149-amino-acid chain: 3-dehydroquinate dehydratase (149 aa).

Catalysis depends on Tyr-26, which acts as the Proton acceptor. Residues Asn-77, His-83, and Asp-90 each coordinate substrate. His-103 serves as the catalytic Proton donor. Substrate is bound by residues 104–105 (LS) and Arg-114.

This sequence belongs to the type-II 3-dehydroquinase family. As to quaternary structure, homododecamer.

It carries out the reaction 3-dehydroquinate = 3-dehydroshikimate + H2O. It functions in the pathway metabolic intermediate biosynthesis; chorismate biosynthesis; chorismate from D-erythrose 4-phosphate and phosphoenolpyruvate: step 3/7. Catalyzes a trans-dehydration via an enolate intermediate. In Vibrio vulnificus (strain YJ016), this protein is 3-dehydroquinate dehydratase.